The following is a 434-amino-acid chain: UDP-N-acetylenolpyruvoylglucosamine reductase (434 aa).

One can recognise an FAD-binding PCMH-type domain in the interval 51-238 (IGAAPAGVVE…TAVEFQLTTD (188 aa)). Arg216 is a catalytic residue. The active-site Proton donor is Ser299. The active site involves Glu425.

The protein belongs to the MurB family. FAD is required as a cofactor.

It is found in the cytoplasm. The catalysed reaction is UDP-N-acetyl-alpha-D-muramate + NADP(+) = UDP-N-acetyl-3-O-(1-carboxyvinyl)-alpha-D-glucosamine + NADPH + H(+). The protein operates within cell wall biogenesis; peptidoglycan biosynthesis. Functionally, cell wall formation. The chain is UDP-N-acetylenolpyruvoylglucosamine reductase from Corynebacterium jeikeium (strain K411).